A 180-amino-acid chain; its full sequence is Cytidylate kinase 2 (180 aa).

7–15 is a binding site for ATP; the sequence is GKSGCGNTT.

Belongs to the cytidylate kinase family. Type 2 subfamily.

Its subcellular location is the cytoplasm. It catalyses the reaction CMP + ATP = CDP + ADP. It carries out the reaction dCMP + ATP = dCDP + ADP. In Borreliella burgdorferi (strain ATCC 35210 / DSM 4680 / CIP 102532 / B31) (Borrelia burgdorferi), this protein is Cytidylate kinase 2 (cmk2).